The chain runs to 572 residues: Proline--tRNA ligase (572 aa).

The protein belongs to the class-II aminoacyl-tRNA synthetase family. ProS type 1 subfamily. As to quaternary structure, homodimer.

The protein localises to the cytoplasm. It catalyses the reaction tRNA(Pro) + L-proline + ATP = L-prolyl-tRNA(Pro) + AMP + diphosphate. Its function is as follows. Catalyzes the attachment of proline to tRNA(Pro) in a two-step reaction: proline is first activated by ATP to form Pro-AMP and then transferred to the acceptor end of tRNA(Pro). As ProRS can inadvertently accommodate and process non-cognate amino acids such as alanine and cysteine, to avoid such errors it has two additional distinct editing activities against alanine. One activity is designated as 'pretransfer' editing and involves the tRNA(Pro)-independent hydrolysis of activated Ala-AMP. The other activity is designated 'posttransfer' editing and involves deacylation of mischarged Ala-tRNA(Pro). The misacylated Cys-tRNA(Pro) is not edited by ProRS. The protein is Proline--tRNA ligase of Psychrobacter cryohalolentis (strain ATCC BAA-1226 / DSM 17306 / VKM B-2378 / K5).